A 1711-amino-acid chain; its full sequence is Nuclear pore complex protein Nup214 (1711 aa).

8 repeat units span residues 472 to 473, 486 to 487, 497 to 498, 511 to 512, 514 to 515, 535 to 536, 588 to 589, and 598 to 599. The tract at residues 472–1703 is 45 X 2 AA repeats of F-G; the sequence is FGAAAAKAPA…NSNAQKPAFG (1232 aa). Leucine-zipper stretches follow at residues 650–672 and 767–788; these read LDDL…VQGL and LTRL…KSKL. Residues 886–905 form a disordered region; it reads KPATANKYTQAAVAPPSPPD. Copy 9 of the repeat occupies 1009–1010; sequence FG. Residues 1012 to 1081 form a disordered region; sequence GSPAVAAPTP…NKSFGFGGFT (70 aa). 2 stretches are compositionally biased toward basic and acidic residues: residues 1037-1051 and 1058-1072; these read TKPK…KEFK and EESK…ETEN. The interval 1044–1711 is interaction with emb; sequence AAESKEFKAV…FGGSSFMNYR (668 aa). Repeat copies occupy residues 1075–1076, 1077–1078, 1097–1098, 1106–1107, 1135–1136, 1218–1219, 1229–1230, and 1240–1241. The segment covering 1251-1261 has biased composition (polar residues); the sequence is TSVTEANNKTD. Positions 1251-1270 are disordered; that stretch reads TSVTEANNKTDPISTTPSAI. Tandem repeats lie at residues 1356–1357, 1388–1389, 1399–1400, 1434–1435, 1449–1450, 1458–1459, 1472–1473, 1481–1482, 1487–1488, 1507–1508, 1512–1513, 1539–1540, 1547–1548, 1562–1563, 1571–1572, 1584–1585, 1588–1589, 1601–1602, 1617–1618, 1623–1624, 1629–1630, 1635–1636, 1641–1642, 1647–1648, 1650–1651, 1662–1663, and 1686–1687. Disordered stretches follow at residues 1533 to 1552 and 1557 to 1614; these read SPQA…SPAT and SGGS…TTTP. Composition is skewed to gly residues over residues 1560–1572 and 1582–1595; these read SIFG…GGFG and GGFG…GGGS. Positions 1596–1614 are enriched in low complexity; the sequence is VAQTGFGSPQAPQQQTTTP. The span at 1688–1698 shows a compositional bias: polar residues; the sequence is NLAQTGNSNAQ. The tract at residues 1688-1711 is disordered; it reads NLAQTGNSNAQKPAFGGSSFMNYR. The stretch at 1702-1703 is repeat 45; that stretch reads FG.

Component of the nuclear pore complex. Interacts with mbo/Nup88 and (via C-terminus) with emb to attenuate emb-mediated protein export.

The protein resides in the nucleus. The protein localises to the nuclear pore complex. It is found in the nucleus membrane. Functionally, part of the nuclear pore complex. Serves as a docking site in the receptor-mediated import of substrates across the nuclear pore complex including emb, RanGAP and phosphorylated Mad. Protects mbo/Nup88 from proteasomal degradation at the nuclear pore. Together with mbo/Nup88, sequesters emb in the cytoplasm and thereby attenuates nuclear export signal (NES)-mediated nuclear export. Together with mbo/Nup88, required for the nuclear import of the Rel family transcription factors dorsal (dl) and Dorsal-related immunity factor (Dif) and the activation of an immune response. The polypeptide is Nuclear pore complex protein Nup214 (Drosophila melanogaster (Fruit fly)).